Consider the following 159-residue polypeptide: Ribosomal RNA large subunit methyltransferase H (159 aa).

S-adenosyl-L-methionine contacts are provided by residues Leu-76, Gly-108, and 127–132; that span reads FSKMTF.

Belongs to the RNA methyltransferase RlmH family. In terms of assembly, homodimer.

It localises to the cytoplasm. The enzyme catalyses pseudouridine(1915) in 23S rRNA + S-adenosyl-L-methionine = N(3)-methylpseudouridine(1915) in 23S rRNA + S-adenosyl-L-homocysteine + H(+). Specifically methylates the pseudouridine at position 1915 (m3Psi1915) in 23S rRNA. The protein is Ribosomal RNA large subunit methyltransferase H of Clostridium botulinum (strain ATCC 19397 / Type A).